The chain runs to 113 residues: Small ribosomal subunit protein bS6 (113 aa).

It belongs to the bacterial ribosomal protein bS6 family.

Its function is as follows. Binds together with bS18 to 16S ribosomal RNA. The polypeptide is Small ribosomal subunit protein bS6 (Ruthia magnifica subsp. Calyptogena magnifica).